Consider the following 429-residue polypeptide: 3-phosphoshikimate 1-carboxyvinyltransferase (429 aa).

Residues Lys11, Ser12, and Arg16 each coordinate 3-phosphoshikimate. Lys11 provides a ligand contact to phosphoenolpyruvate. Phosphoenolpyruvate contacts are provided by Gly82 and Arg110. Residues Ser155, Gln157, Asp302, and Lys329 each contribute to the 3-phosphoshikimate site. Gln157 lines the phosphoenolpyruvate pocket. The active-site Proton acceptor is the Asp302. Phosphoenolpyruvate is bound by residues Arg333 and Arg385.

The protein belongs to the EPSP synthase family. In terms of assembly, monomer.

The protein localises to the cytoplasm. It catalyses the reaction 3-phosphoshikimate + phosphoenolpyruvate = 5-O-(1-carboxyvinyl)-3-phosphoshikimate + phosphate. It functions in the pathway metabolic intermediate biosynthesis; chorismate biosynthesis; chorismate from D-erythrose 4-phosphate and phosphoenolpyruvate: step 6/7. Catalyzes the transfer of the enolpyruvyl moiety of phosphoenolpyruvate (PEP) to the 5-hydroxyl of shikimate-3-phosphate (S3P) to produce enolpyruvyl shikimate-3-phosphate and inorganic phosphate. The protein is 3-phosphoshikimate 1-carboxyvinyltransferase of Helicobacter pylori (strain ATCC 700392 / 26695) (Campylobacter pylori).